The chain runs to 193 residues: MEHDAALLSSSEIDRIGRRIGRPLVLVGMMGVGKTTVGRKLASLLHVPFVDADEEIERAAHMPIPEIFATYGEPYFRDGERRVIARLMGTGRNTDRKVLSTGGGAFCDPATRALILERGIAVWLDSDVDTLVERVGRKDNRPLLKTGNPREILTRLKDEREPFYAQAPIHMTSGAQPHQVTASKILRAIDQWL.

Position 31 to 36 (31 to 36 (GVGKTT)) interacts with ATP. Position 35 (Thr35) interacts with Mg(2+). Asp53, Arg77, and Gly103 together coordinate substrate. Arg141 lines the ATP pocket. Residue Arg160 participates in substrate binding. Gln176 is an ATP binding site.

It belongs to the shikimate kinase family. In terms of assembly, monomer. Requires Mg(2+) as cofactor.

The protein resides in the cytoplasm. The enzyme catalyses shikimate + ATP = 3-phosphoshikimate + ADP + H(+). It participates in metabolic intermediate biosynthesis; chorismate biosynthesis; chorismate from D-erythrose 4-phosphate and phosphoenolpyruvate: step 5/7. Functionally, catalyzes the specific phosphorylation of the 3-hydroxyl group of shikimic acid using ATP as a cosubstrate. This chain is Shikimate kinase, found in Novosphingobium aromaticivorans (strain ATCC 700278 / DSM 12444 / CCUG 56034 / CIP 105152 / NBRC 16084 / F199).